A 432-amino-acid polypeptide reads, in one-letter code: FMRFamide peptide receptor frpr-18 (432 aa).

The Extracellular portion of the chain corresponds to 1-8; it reads MESQQLMA. The helical transmembrane segment at 9–29 threads the bilayer; sequence CAILVIVLVGIFGNSLSFILF. Residues 30-42 are Cytoplasmic-facing; the sequence is SRPHMRSSSVNVL. Residues 43–63 traverse the membrane as a helical segment; that stretch reads LCALSFFDFSLLTLSIPIFVI. At 64–84 the chain is on the extracellular side; that stretch reads PNLDLWANDLSLSTYMAYILK. Residues 85 to 105 form a helical membrane-spanning segment; that stretch reads LIYPINLMMQTCSVYIMVMIT. Over 106 to 128 the chain is Cytoplasmic; sequence LERWVAVCRPLQVRVWCTPRKSR. A helical transmembrane segment spans residues 129–149; sequence NAILVIIVSAFLYNFVRFFEY. Over 150–176 the chain is Extracellular; that stretch reads RFVVTESGALYEKWLRDPGKHRWYYVG. A helical transmembrane segment spans residues 177–197; it reads YYTILYIVTHFLVPFSVMAFA. Residues 198–225 are Cytoplasmic-facing; it reads NGHVIVAMCKLSKTRQMLTRQQQREQST. Residues 226-246 form a helical membrane-spanning segment; that stretch reads TVMLLIVTFVFAICNTLPFLL. The Extracellular portion of the chain corresponds to 247-271; it reads NVSESIFPTLFQDESTRGLAYWLND. A helical transmembrane segment spans residues 272 to 292; that stretch reads LSNLLVVLNSGTTFIIYFTFS. At 293–432 the chain is on the cytoplasmic side; it reads EKYRQTLVFI…GEPDSPCQPC (140 aa). Disordered regions lie at residues 328–349 and 388–411; these read ISSE…SSRS and KLPS…GMPE.

This sequence belongs to the G-protein coupled receptor 1 family. In terms of tissue distribution, expressed in a subset of neurons in the head, midbody, and tail, including AIY, ASI, BAG, URA, CAN, I6, PVQ, DVA, RIM, and VC, and in the anal sphincter and intestinal muscles. Expression from the ASI neurons is involved in promoting arousal.

The protein localises to the cell membrane. G-protein coupled receptor for flp-2 neuropeptides. May act through the G(q) alpha type of G proteins. Involved in mediating arousal from the sleep-like state called lethargus, which occurs during molting between larval and adult stages, in part by regulating touch sensitivity, and working in concert with neuropeptide pdf-1. The chain is FMRFamide peptide receptor frpr-18 from Caenorhabditis elegans.